A 325-amino-acid polypeptide reads, in one-letter code: NADH-quinone oxidoreductase subunit H (325 aa).

A run of 8 helical transmembrane segments spans residues Val11 to Phe31, Val81 to Val101, Ile114 to Gly134, Leu154 to Phe174, Leu186 to Val206, Phe237 to Phe257, Leu265 to Ile285, and Val304 to Ala324.

This sequence belongs to the complex I subunit 1 family. NDH-1 is composed of 13 different subunits. Subunits NuoA, H, J, K, L, M, N constitute the membrane sector of the complex.

The protein localises to the cell inner membrane. It catalyses the reaction a quinone + NADH + 5 H(+)(in) = a quinol + NAD(+) + 4 H(+)(out). Functionally, NDH-1 shuttles electrons from NADH, via FMN and iron-sulfur (Fe-S) centers, to quinones in the respiratory chain. The immediate electron acceptor for the enzyme in this species is believed to be ubiquinone. Couples the redox reaction to proton translocation (for every two electrons transferred, four hydrogen ions are translocated across the cytoplasmic membrane), and thus conserves the redox energy in a proton gradient. This subunit may bind ubiquinone. The protein is NADH-quinone oxidoreductase subunit H of Erwinia tasmaniensis (strain DSM 17950 / CFBP 7177 / CIP 109463 / NCPPB 4357 / Et1/99).